Consider the following 558-residue polypeptide: Dihydroxy-acid dehydratase (558 aa).

Mg(2+) is bound at residue Asp-78. Cys-119 is a binding site for [2Fe-2S] cluster. 2 residues coordinate Mg(2+): Asp-120 and Lys-121. N6-carboxylysine is present on Lys-121. Cys-192 serves as a coordination point for [2Fe-2S] cluster. Glu-446 lines the Mg(2+) pocket. Ser-472 serves as the catalytic Proton acceptor.

Belongs to the IlvD/Edd family. Homodimer. [2Fe-2S] cluster serves as cofactor. Mg(2+) is required as a cofactor.

It carries out the reaction (2R)-2,3-dihydroxy-3-methylbutanoate = 3-methyl-2-oxobutanoate + H2O. The catalysed reaction is (2R,3R)-2,3-dihydroxy-3-methylpentanoate = (S)-3-methyl-2-oxopentanoate + H2O. The protein operates within amino-acid biosynthesis; L-isoleucine biosynthesis; L-isoleucine from 2-oxobutanoate: step 3/4. Its pathway is amino-acid biosynthesis; L-valine biosynthesis; L-valine from pyruvate: step 3/4. Functionally, functions in the biosynthesis of branched-chain amino acids. Catalyzes the dehydration of (2R,3R)-2,3-dihydroxy-3-methylpentanoate (2,3-dihydroxy-3-methylvalerate) into 2-oxo-3-methylpentanoate (2-oxo-3-methylvalerate) and of (2R)-2,3-dihydroxy-3-methylbutanoate (2,3-dihydroxyisovalerate) into 2-oxo-3-methylbutanoate (2-oxoisovalerate), the penultimate precursor to L-isoleucine and L-valine, respectively. The chain is Dihydroxy-acid dehydratase from Campylobacter lari (strain RM2100 / D67 / ATCC BAA-1060).